Here is a 1151-residue protein sequence, read N- to C-terminus: Protein kinase C-like 1 (1151 aa).

REM-1 domains lie at 1–67 (MSFS…KTAQ) and 106–183 (KYDC…INVD). Residues 64 to 88 (KTAQQSQGENGSEDNERCNSKEYGF) are disordered. The region spanning 190-309 (QPNDIMDNQQ…IRKKKAGQTN (120 aa)) is the C2 domain. Phosphoserine is present on serine 226. The interval 306 to 331 (GQTNEQQGWVNASNINGGSSLASEEG) is disordered. Phorbol-ester/DAG-type zinc fingers lie at residues 414 to 461 (GHHF…VTKC) and 481 to 531 (PHRF…PDFC). Disordered stretches follow at residues 546–620 (QDTK…IIDK) and 649–669 (AQQTAEFSSPEKTLDPTSNRR). Positions 560–577 (PSAQLGSSIGTANGSDLS) are enriched in polar residues. Positions 605–620 (VGRDSPTKQHDPIIDK) are enriched in basic and acidic residues. Serine 761 carries the phosphoserine modification. The interval 782 to 816 (LAPTSTHASRTTDQQSPQKSQTSTSAKHKKRAAKR) is disordered. The span at 792–806 (TTDQQSPQKSQTSTS) shows a compositional bias: low complexity. A compositionally biased stretch (basic residues) spans 807 to 816 (AKHKKRAAKR). Positions 824 to 1083 (FVLLKVLGKG…ADEVMEEPFF (260 aa)) constitute a Protein kinase domain. ATP-binding positions include 830 to 838 (LGKGNFGKV) and lysine 853. Residue aspartate 949 is the Proton acceptor of the active site. The region spanning 1084–1151 (RNINFDDILN…FSFMPDDLDL (68 aa)) is the AGC-kinase C-terminal domain.

It belongs to the protein kinase superfamily. AGC Ser/Thr protein kinase family. PKC subfamily.

The enzyme catalyses L-seryl-[protein] + ATP = O-phospho-L-seryl-[protein] + ADP + H(+). It catalyses the reaction L-threonyl-[protein] + ATP = O-phospho-L-threonyl-[protein] + ADP + H(+). Functionally, required for cell growth and for the G2-&gt;M transition of the cell division cycle. Mediates a protein kinase cascade; it activates BCK1 which itself activates MKK1/MKK2. The polypeptide is Protein kinase C-like 1 (PKC1) (Saccharomyces cerevisiae (strain ATCC 204508 / S288c) (Baker's yeast)).